Reading from the N-terminus, the 614-residue chain is FAD-dependent monooxygenase terD (614 aa).

The first 23 residues, 1-23 (MSSKFDVVICGSGTAGLAAATWL), serve as a signal peptide directing secretion. Residues 6-35 (DVVI…ILES), Gln44, Val137, and 239-241 (RVY) each bind FAD. Asn260 carries N-linked (GlcNAc...) asparagine glycosylation. FAD-binding residues include Tyr282 and Asp303. A glycan (N-linked (GlcNAc...) asparagine) is linked at Asn317. An FAD-binding site is contributed by Ser319. An N-linked (GlcNAc...) asparagine glycan is attached at Asn602.

It belongs to the PheA/TfdB FAD monooxygenase family. Requires FAD as cofactor.

Its pathway is secondary metabolite biosynthesis. In terms of biological role, FAD-dependent monooxygenase; part of the gene cluster that mediates the biosynthesis of terrein, a fungal metabolite with ecological, antimicrobial, antiproliferative, and antioxidative activities. The first step in the pathway is performed by the polyketide synthase terA that produces 4-hydroxy-6-methylpyranon (4-HMP), orsellinic acid (OA), and 2,3-dehydro-6-hydroxymellein (2,3-dehydro-6-HM) by condensing acetyl-CoA with two, three, or four malonyl-CoA units, respectively. 4-HMP and OA are not pathway intermediates, but are rather shunt or side products. 2,3-dehydro-6-HM is further converted to 6-hydroxymellein (6-HM) by the 6-hydroxymellein synthase terB. The monooxygenases terC and terD, the multicopper oxidase terE and the Kelch-like protein terF are then involved in the transformation of 6-HM to terrein. Even if they are co-regulated with the other terrein cluster genes, terH and terI seem to be dispensable for terrein production; whereas one or both of the 2 transporters terG and terJ are probably required for efficient secretion of metabolites. This Aspergillus terreus (strain NIH 2624 / FGSC A1156) protein is FAD-dependent monooxygenase terD.